Here is a 180-residue protein sequence, read N- to C-terminus: Adenine phosphoribosyltransferase (180 aa).

This sequence belongs to the purine/pyrimidine phosphoribosyltransferase family. Homodimer.

Its subcellular location is the cytoplasm. The catalysed reaction is AMP + diphosphate = 5-phospho-alpha-D-ribose 1-diphosphate + adenine. The protein operates within purine metabolism; AMP biosynthesis via salvage pathway; AMP from adenine: step 1/1. Catalyzes a salvage reaction resulting in the formation of AMP, that is energically less costly than de novo synthesis. The chain is Adenine phosphoribosyltransferase from Pasteurella multocida (strain Pm70).